The following is a 272-amino-acid chain: Protein alcS (272 aa).

Positions Met-1–Thr-14 are enriched in polar residues. Residues Met-1–Ala-21 form a disordered region. Helical transmembrane passes span Pro-63–Trp-83, Ile-91–Leu-111, Val-122–Ala-144, Phe-164–Ala-184, Val-192–Trp-212, and Leu-225–Val-245.

The protein belongs to the acetate uptake transporter (AceTr) (TC 2.A.96) family.

It is found in the cell membrane. Its subcellular location is the cell septum. The sequence is that of Protein alcS from Aspergillus fumigatus (strain CBS 144.89 / FGSC A1163 / CEA10) (Neosartorya fumigata).